A 211-amino-acid polypeptide reads, in one-letter code: Large ribosomal subunit protein uL3 (211 aa).

At Gln150 the chain carries N5-methylglutamine.

This sequence belongs to the universal ribosomal protein uL3 family. In terms of assembly, part of the 50S ribosomal subunit. Forms a cluster with proteins L14 and L19. Post-translationally, methylated by PrmB.

One of the primary rRNA binding proteins, it binds directly near the 3'-end of the 23S rRNA, where it nucleates assembly of the 50S subunit. The chain is Large ribosomal subunit protein uL3 from Stutzerimonas stutzeri (strain A1501) (Pseudomonas stutzeri).